Consider the following 629-residue polypeptide: tRNA uridine 5-carboxymethylaminomethyl modification enzyme MnmG (629 aa).

Residues 13-18 (GGGHAG), Val-125, and Ser-180 contribute to the FAD site. 273–287 (GPRYCPSIEDKVMRF) lines the NAD(+) pocket. Residue Gln-370 participates in FAD binding.

Belongs to the MnmG family. As to quaternary structure, homodimer. Heterotetramer of two MnmE and two MnmG subunits. The cofactor is FAD.

It is found in the cytoplasm. Functionally, NAD-binding protein involved in the addition of a carboxymethylaminomethyl (cmnm) group at the wobble position (U34) of certain tRNAs, forming tRNA-cmnm(5)s(2)U34. The polypeptide is tRNA uridine 5-carboxymethylaminomethyl modification enzyme MnmG (Escherichia coli (strain SMS-3-5 / SECEC)).